An 85-amino-acid polypeptide reads, in one-letter code: Large ribosomal subunit protein bL27 (85 aa).

The tract at residues 1-20 is disordered; the sequence is MATKKAGGSTRNGRDSEAKR.

It belongs to the bacterial ribosomal protein bL27 family.

This chain is Large ribosomal subunit protein bL27, found in Glaesserella parasuis serovar 5 (strain SH0165) (Haemophilus parasuis).